A 432-amino-acid chain; its full sequence is Enolase 2 (432 aa).

Q163 provides a ligand contact to (2R)-2-phosphoglycerate. Catalysis depends on E205, which acts as the Proton donor. 3 residues coordinate Mg(2+): D242, E287, and D314. (2R)-2-phosphoglycerate is bound by residues K339, R368, S369, and K390. The active-site Proton acceptor is K339.

It belongs to the enolase family. As to quaternary structure, homodimer. Probably forms octamers. Mg(2+) serves as cofactor.

The protein localises to the cytoplasm. Its subcellular location is the secreted. It localises to the cell surface. It carries out the reaction (2R)-2-phosphoglycerate = phosphoenolpyruvate + H2O. The protein operates within carbohydrate degradation; glycolysis; pyruvate from D-glyceraldehyde 3-phosphate: step 4/5. In terms of biological role, catalyzes the reversible conversion of 2-phosphoglycerate (2-PG) into phosphoenolpyruvate (PEP). It is essential for the degradation of carbohydrates via glycolysis. The sequence is that of Enolase 2 from Lactobacillus gasseri (strain ATCC 33323 / DSM 20243 / BCRC 14619 / CIP 102991 / JCM 1131 / KCTC 3163 / NCIMB 11718 / NCTC 13722 / AM63).